We begin with the raw amino-acid sequence, 371 residues long: Neuropeptide Y receptor type 6 (371 aa).

Over 1–31 the chain is Extracellular; the sequence is MEVSLNDPASNKTSAKSNSSAFFYFESCQSP. N-linked (GlcNAc...) asparagine glycans are attached at residues asparagine 11 and asparagine 18. Residues 32–52 traverse the membrane as a helical segment; the sequence is SLALLLLLIAYTVVLIMGICG. Residues 53–72 lie on the Cytoplasmic side of the membrane; that stretch reads NLSLITIIFKKQREAQNVTN. The chain crosses the membrane as a helical span at residues 73 to 93; that stretch reads ILIANLSLSDILVCVMCIPFT. Over 94 to 111 the chain is Extracellular; sequence AIYTLMDRWIFGNTMCKL. A disulfide bond links cysteine 109 and cysteine 196. A helical transmembrane segment spans residues 112–132; that stretch reads TSYVQSVSISVSIFSLVLIAI. The Cytoplasmic portion of the chain corresponds to 133-150; that stretch reads ERYQLIVNPRGWKPSASH. Residues 151 to 171 traverse the membrane as a helical segment; that stretch reads AYWGIMLIWLFSLLLSIPLLL. Residues 172 to 213 are Extracellular-facing; sequence SYHLTDEPFRNLSLPTDLYSHHVVCVEHWPSKTNQLLYSTSL. N-linked (GlcNAc...) asparagine glycosylation occurs at asparagine 182. Residues 214-234 form a helical membrane-spanning segment; it reads IMLQYFVPLGFMFICYLKIVI. At 235–263 the chain is on the cytoplasmic side; sequence CLHKRNSKIDRRRENESRLTENKRINTML. The chain crosses the membrane as a helical span at residues 264–284; that stretch reads ISIVVTFAACWLPLNTFNVIF. The Extracellular segment spans residues 285 to 297; the sequence is DWYHEVLMSCHHD. Residues 298 to 318 traverse the membrane as a helical segment; sequence LVFAICHLVAMVSTCINPLFY. Residues 319 to 371 are Cytoplasmic-facing; it reads GFLNRNFQKDLVVLIHHCLCFALRERYENIAISTLHTDESKGSLRVAHIPAGI. Cysteine 336 is lipidated: S-palmitoyl cysteine.

It belongs to the G-protein coupled receptor 1 family. As to expression, expressed in hippocampus, striatum, hypothalamus, cerebellum, small intestine, colon and adrenal gland.

The protein localises to the cell membrane. Receptor for neuropeptide Y and peptide YY. The activity of this receptor is mediated by G proteins that inhibit adenylate cyclase activity. The protein is Neuropeptide Y receptor type 6 (NPY6R) of Oryctolagus cuniculus (Rabbit).